We begin with the raw amino-acid sequence, 434 residues long: Asparagine--tRNA ligase (434 aa).

This sequence belongs to the class-II aminoacyl-tRNA synthetase family.

The protein resides in the cytoplasm. The catalysed reaction is tRNA(Asn) + L-asparagine + ATP = L-asparaginyl-tRNA(Asn) + AMP + diphosphate + H(+). This Pyrococcus furiosus (strain ATCC 43587 / DSM 3638 / JCM 8422 / Vc1) protein is Asparagine--tRNA ligase (asnS).